A 99-amino-acid polypeptide reads, in one-letter code: Large ribosomal subunit protein uL23 (99 aa).

This sequence belongs to the universal ribosomal protein uL23 family. In terms of assembly, part of the 50S ribosomal subunit. Contacts protein L29, and trigger factor when it is bound to the ribosome.

Functionally, one of the early assembly proteins it binds 23S rRNA. One of the proteins that surrounds the polypeptide exit tunnel on the outside of the ribosome. Forms the main docking site for trigger factor binding to the ribosome. The sequence is that of Large ribosomal subunit protein uL23 from Pseudomonas aeruginosa (strain LESB58).